A 298-amino-acid polypeptide reads, in one-letter code: 3'-5' exonuclease crn-4 (298 aa).

Residues 12–192 (LILDFETTSD…DDCLNIATIL (181 aa)) enclose the Exonuclease domain. Mg(2+) contacts are provided by Asp-15, Glu-17, and Asp-184. Residues Cys-210, Cys-260, Cys-263, and Cys-270 each coordinate Zn(2+).

In terms of assembly, homodimer (via C-terminus). Interacts with crn-5; interaction promotes the DNase activity of crn-4. Interacts with cps-6, crn-1 and cyn-13. Requires Mg(2+) as cofactor.

Exonuclease activity is inhibited in vitro by pontacyl violet 6R (PV6R), p-chloromercuriphenyl sulfonate (PCMPS), 5,5'-dithiobis(2-nitrobenzoic acid) (DTNB), aurintricarboxylic acid (ATA), 2-morpholin-4-ylethanesulfonate (MES), 4-[(4,6-dichloro-1,3,5-triazin-2-yl)amino]-2-(3-hydroxy-6-oxoxanthen-9-yl)benzoic acid (DR396) and fmoc-d-Cha-OH (FDCO). Interaction with ssRNA is reduced in vitro by PV6R. Its function is as follows. Possesses 3'-&gt;5' exoribonuclease activity in digestion of DNA and RNA. Cleaves nucleic acid substrates with efficiencies in the following order: single-stranded RNA (ssRNA) &gt; double-stranded DNA (dsDNA) &gt; single-stranded DNA (ssDNA). Involved in apoptotic DNA degradation. The chain is 3'-5' exonuclease crn-4 (crn-4) from Caenorhabditis elegans.